We begin with the raw amino-acid sequence, 671 residues long: Condensin complex subunit 2 (671 aa).

A compositionally biased stretch (polar residues) spans 1-24 (MDESLTPNPKQKPASTTTRIQAPT). 3 disordered regions span residues 1–33 (MDESLTPNPKQKPASTTTRIQAPTSPFFLGSND), 404–444 (NSWA…KQAE), and 510–564 (RRKN…ISQP). The Kleisin-gamma middle domain (GM domain) involved in chromosome-binding signature appears at 406–415 (WAGPDHWKYR). Positions 536–556 (VYDDDDGPFDDNENDQSDAED) are enriched in acidic residues.

The protein belongs to the CND2 (condensin subunit 2) family. Component of the condensin complex. As to expression, mostly expressed in flower buds and flowers, and, to a lower extent, in roots, stems, leaves and seedlings.

It localises to the cytoplasm. It is found in the chromosome. In terms of biological role, regulatory subunit of the condensin complex, a complex required for conversion of interphase chromatin into mitotic-like condense chromosomes. The condensin complex probably introduces positive supercoils into relaxed DNA in the presence of type I topoisomerases and converts nicked DNA into positive knotted forms in the presence of type II topoisomerases. Essential protein. This chain is Condensin complex subunit 2 (CAPH), found in Arabidopsis thaliana (Mouse-ear cress).